Consider the following 33-residue polypeptide: Large ribosomal subunit protein uL24 (33 aa).

The protein belongs to the universal ribosomal protein uL24 family. As to quaternary structure, component of the large ribosomal subunit.

The protein resides in the cytoplasm. Its function is as follows. Component of the large ribosomal subunit. The ribosome is a large ribonucleoprotein complex responsible for the synthesis of proteins in the cell. In Xenopus laevis (African clawed frog), this protein is Large ribosomal subunit protein uL24 (rpl26).